The following is a 66-amino-acid chain: Gas vesicle protein A (66 aa).

It belongs to the gas vesicle GvpA family. The gas vesicle shell is 2 nm thick and consists of a single layer of this protein. It forms helical ribs nearly perpendicular to the long axis of the vesicle.

It localises to the gas vesicle shell. In terms of biological role, gas vesicles are hollow, gas filled proteinaceous nanostructures found in some microorganisms. During planktonic growth they allow positioning of the organism at a favorable depth for light or nutrient acquisition. GvpA forms the protein shell. The polypeptide is Gas vesicle protein A (Thiocapsa pendens (Amoebobacter pendens)).